Reading from the N-terminus, the 315-residue chain is Ornithine carbamoyltransferase (315 aa).

Carbamoyl phosphate contacts are provided by residues 53–56, Gln-80, Arg-104, and 131–134; these read STRT and HPCQ. Residues Asn-163, Asp-227, and 231 to 232 contribute to the L-ornithine site; that span reads SM. Carbamoyl phosphate-binding positions include 267 to 268 and Arg-295; that span reads CL.

This sequence belongs to the aspartate/ornithine carbamoyltransferase superfamily. OTCase family.

It localises to the cytoplasm. The catalysed reaction is carbamoyl phosphate + L-ornithine = L-citrulline + phosphate + H(+). It functions in the pathway amino-acid degradation; L-arginine degradation via ADI pathway; carbamoyl phosphate from L-arginine: step 2/2. Reversibly catalyzes the transfer of the carbamoyl group from carbamoyl phosphate (CP) to the N(epsilon) atom of ornithine (ORN) to produce L-citrulline. The polypeptide is Ornithine carbamoyltransferase (Rhodococcus opacus (strain B4)).